Here is a 63-residue protein sequence, read N- to C-terminus: Small ribosomal subunit protein eS17 (63 aa).

The protein belongs to the eukaryotic ribosomal protein eS17 family.

This chain is Small ribosomal subunit protein eS17, found in Methanococcus maripaludis (strain C6 / ATCC BAA-1332).